A 26-amino-acid polypeptide reads, in one-letter code: ATP synthase subunit gamma, mitochondrial (26 aa).

It belongs to the ATPase gamma chain family. F-type ATPases have 2 components, CF(1) - the catalytic core - and CF(0) - the membrane proton channel. CF(1) has five subunits: alpha(3), beta(3), gamma(1), delta(1), epsilon(1). CF(0) has three main subunits: a, b and c.

The protein localises to the mitochondrion. The protein resides in the mitochondrion inner membrane. Functionally, mitochondrial membrane ATP synthase (F(1)F(0) ATP synthase or Complex V) produces ATP from ADP in the presence of a proton gradient across the membrane which is generated by electron transport complexes of the respiratory chain. F-type ATPases consist of two structural domains, F(1) - containing the extramembraneous catalytic core, and F(0) - containing the membrane proton channel, linked together by a central stalk and a peripheral stalk. During catalysis, ATP synthesis in the catalytic domain of F(1) is coupled via a rotary mechanism of the central stalk subunits to proton translocation. Part of the complex F(1) domain and the central stalk which is part of the complex rotary element. The gamma subunit protrudes into the catalytic domain formed of alpha(3)beta(3). Rotation of the central stalk against the surrounding alpha(3)beta(3) subunits leads to hydrolysis of ATP in three separate catalytic sites on the beta subunits. The polypeptide is ATP synthase subunit gamma, mitochondrial (ATPC) (Spinacia oleracea (Spinach)).